Here is a 359-residue protein sequence, read N- to C-terminus: Fructose-bisphosphate aldolase class 2 (359 aa).

K9 carries the N6-acetyllysine modification. S62 is a binding site for D-glyceraldehyde 3-phosphate. D110 acts as the Proton donor in catalysis. Zn(2+) contacts are provided by H111, D145, E175, and H227. Residue G228 coordinates dihydroxyacetone phosphate. Position 265 (H265) interacts with Zn(2+). Residues 266 to 268 and 287 to 290 each bind dihydroxyacetone phosphate; these read GGS and NIDT.

It belongs to the class II fructose-bisphosphate aldolase family. In terms of assembly, homodimer. It depends on Zn(2+) as a cofactor.

It carries out the reaction beta-D-fructose 1,6-bisphosphate = D-glyceraldehyde 3-phosphate + dihydroxyacetone phosphate. It functions in the pathway carbohydrate degradation; glycolysis; D-glyceraldehyde 3-phosphate and glycerone phosphate from D-glucose: step 4/4. In terms of biological role, catalyzes the aldol condensation of dihydroxyacetone phosphate (DHAP or glycerone-phosphate) with glyceraldehyde 3-phosphate (G3P) to form fructose 1,6-bisphosphate (FBP) in gluconeogenesis and the reverse reaction in glycolysis. The polypeptide is Fructose-bisphosphate aldolase class 2 (fbaA) (Escherichia coli O157:H7).